Consider the following 169-residue polypeptide: Thermonuclease (169 aa).

The first 26 residues, 1-26 (MKKITTGLIIVVAAIIVLSIQFMTES), serve as a signal peptide directing secretion. Catalysis depends on residues arginine 65, glutamate 73, and arginine 115.

It belongs to the thermonuclease family. Ca(2+) serves as cofactor.

It localises to the secreted. The catalysed reaction is Endonucleolytic cleavage to nucleoside 3'-phosphates and 3'-phosphooligonucleotide end-products.. Enzyme that catalyzes the hydrolysis of both DNA and RNA at the 5'-position of the phosphodiester bond. This Staphylococcus hyicus protein is Thermonuclease (nucH).